We begin with the raw amino-acid sequence, 226 residues long: Ribonuclease 3 (226 aa).

One can recognise an RNase III domain in the interval 6-128; the sequence is INRLQRKLGY…LIGGVFLDSN (123 aa). Glu41 provides a ligand contact to Mg(2+). Residue Asp45 is part of the active site. Mg(2+)-binding residues include Asp114 and Glu117. The active site involves Glu117. The region spanning 155–225 is the DRBM domain; that stretch reads DPKTRLQEYL…AEQALKKLEL (71 aa).

The protein belongs to the ribonuclease III family. As to quaternary structure, homodimer. Mg(2+) is required as a cofactor.

The protein resides in the cytoplasm. The catalysed reaction is Endonucleolytic cleavage to 5'-phosphomonoester.. Digests double-stranded RNA. Involved in the processing of primary rRNA transcript to yield the immediate precursors to the large and small rRNAs (23S and 16S). Processes some mRNAs, and tRNAs when they are encoded in the rRNA operon. Processes pre-crRNA and tracrRNA of type II CRISPR loci if present in the organism. The sequence is that of Ribonuclease 3 from Salmonella enteritidis PT4 (strain P125109).